Reading from the N-terminus, the 321-residue chain is ATP-dependent 6-phosphofructokinase (321 aa).

Gly-12 provides a ligand contact to ATP. ADP is bound by residues 22–26 (RGVVR) and 55–60 (RYSVSD). ATP-binding positions include 73 to 74 (RF) and 103 to 106 (GDGS). Residue Asp-104 coordinates Mg(2+). 127-129 (TID) is a binding site for substrate. Asp-129 (proton acceptor) is an active-site residue. Position 156 (Arg-156) interacts with ADP. Substrate-binding positions include Arg-164 and 171–173 (MGR). ADP is bound by residues 187 to 189 (GCE), Arg-213, and 215 to 217 (KRH). Residues Glu-224, Arg-245, and 251–254 (HIQR) each bind substrate.

The protein belongs to the phosphofructokinase type A (PFKA) family. ATP-dependent PFK group I subfamily. Prokaryotic clade 'B1' sub-subfamily. Homotetramer. It depends on Mg(2+) as a cofactor.

It localises to the cytoplasm. The catalysed reaction is beta-D-fructose 6-phosphate + ATP = beta-D-fructose 1,6-bisphosphate + ADP + H(+). The protein operates within carbohydrate degradation; glycolysis; D-glyceraldehyde 3-phosphate and glycerone phosphate from D-glucose: step 3/4. With respect to regulation, allosterically activated by ADP and other diphosphonucleosides, and allosterically inhibited by phosphoenolpyruvate. Functionally, catalyzes the phosphorylation of D-fructose 6-phosphate to fructose 1,6-bisphosphate by ATP, the first committing step of glycolysis. This chain is ATP-dependent 6-phosphofructokinase, found in Haemophilus influenzae (strain 86-028NP).